Reading from the N-terminus, the 216-residue chain is Inorganic pyrophosphatase (216 aa).

Substrate contacts are provided by lysine 39, arginine 53, and tyrosine 65. Residues aspartate 93, aspartate 98, and aspartate 131 each coordinate Mg(2+). Residue tyrosine 168 participates in substrate binding.

Belongs to the PPase family. As to quaternary structure, homohexamer. The cofactor is Mg(2+).

The protein localises to the cytoplasm. It catalyses the reaction diphosphate + H2O = 2 phosphate + H(+). Catalyzes the hydrolysis of inorganic pyrophosphate (PPi) forming two phosphate ions. This is Inorganic pyrophosphatase from Chlamydia caviae (strain ATCC VR-813 / DSM 19441 / 03DC25 / GPIC) (Chlamydophila caviae).